The primary structure comprises 1173 residues: BRCA2-interacting transcriptional repressor EMSY (1173 aa).

One can recognise an ENT domain in the interval 16–100 (CKRILRKLEL…EWSIEGRRLV (85 aa)). Positions 149–177 (STTSTPPSASAPSSSSAAVKSPRPASPAS) are enriched in low complexity. Disordered stretches follow at residues 149–179 (STTSTPPSASAPSSSSAAVKSPRPASPASNV), 191–216 (KSVSCSDEDEKPRKRRRTSSSSSSPV), 676–720 (NRSA…DAPP), 797–816 (SAEQRESPEPSGQSAAESDA), 905–998 (RVCE…GAQV), 1020–1046 (PRAPVSSSSSSEAALKLQAESSSEKPS), and 1139–1173 (DYTSQRLDEEQAMEQEVDSSNDEGAAASPSADQSQ). Low complexity predominate over residues 683–693 (TTSTHTSAAAA). 2 stretches are compositionally biased toward low complexity: residues 911 to 921 (SSSSSSSSSSS) and 937 to 953 (SSSSAPATAASANTPHT). 2 stretches are compositionally biased toward polar residues: residues 961–976 (QAPTTHNRPNTHTQLS) and 989–998 (SSKTSSGAQV). The span at 1025-1040 (SSSSSSEAALKLQAES) shows a compositional bias: low complexity. Residues 1148–1159 (EQAMEQEVDSSN) show a composition bias toward acidic residues.

In terms of assembly, homodimer.

The protein resides in the nucleus. Regulator which is able to repress transcription, possibly via its interaction with a multiprotein chromatin remodeling complex that modifies the chromatin. This is BRCA2-interacting transcriptional repressor EMSY from Danio rerio (Zebrafish).